A 70-amino-acid polypeptide reads, in one-letter code: Small ribosomal subunit protein bS21 (70 aa).

It belongs to the bacterial ribosomal protein bS21 family.

The protein is Small ribosomal subunit protein bS21 of Methylobacillus flagellatus (strain ATCC 51484 / DSM 6875 / VKM B-1610 / KT).